The sequence spans 326 residues: ATP-dependent 6-phosphofructokinase (326 aa).

Gly14 is an ATP binding site. ADP is bound at residue 24 to 28 (RAVVR). Residues 75-76 (RF) and 105-108 (GNGS) contribute to the ATP site. Asn106 serves as a coordination point for Mg(2+). 129–131 (TID) is a substrate binding site. The Proton acceptor role is filled by Asp131. Arg158 lines the ADP pocket. Residues Arg166 and 173-175 (MGR) contribute to the substrate site. ADP is bound by residues 189–191 (GAE), Lys215, and 216–218 (KSA). Substrate-binding positions include Glu225, Arg248, and 254 to 257 (HTQR).

It belongs to the phosphofructokinase type A (PFKA) family. ATP-dependent PFK group I subfamily. Prokaryotic clade 'B1' sub-subfamily. In terms of assembly, homotetramer. It depends on Mg(2+) as a cofactor.

Its subcellular location is the cytoplasm. It catalyses the reaction beta-D-fructose 6-phosphate + ATP = beta-D-fructose 1,6-bisphosphate + ADP + H(+). It participates in carbohydrate degradation; glycolysis; D-glyceraldehyde 3-phosphate and glycerone phosphate from D-glucose: step 3/4. Allosterically activated by ADP and other diphosphonucleosides, and allosterically inhibited by phosphoenolpyruvate. Its function is as follows. Catalyzes the phosphorylation of D-fructose 6-phosphate to fructose 1,6-bisphosphate by ATP, the first committing step of glycolysis. The sequence is that of ATP-dependent 6-phosphofructokinase from Coxiella burnetii (strain RSA 493 / Nine Mile phase I).